A 392-amino-acid chain; its full sequence is Stilbene synthase 5 (392 aa).

55–58 (KFNR) provides a ligand contact to substrate. C164 is an active-site residue. Residues L267 and 305–307 (GGP) contribute to the substrate site.

The protein belongs to the thiolase-like superfamily. Chalcone/stilbene synthases family. Homodimer.

The protein localises to the cytoplasm. The catalysed reaction is 4-coumaroyl-CoA + 3 malonyl-CoA + 3 H(+) = trans-resveratrol + 4 CO2 + 4 CoA. Its pathway is phytoalexin biosynthesis; 3,4',5-trihydroxystilbene biosynthesis; 3,4',5-trihydroxystilbene from trans-4-coumarate: step 2/2. Mediates resistance to pathogens which are sensitive to stilbenes. The protein is Stilbene synthase 5 of Vitis vinifera (Grape).